Consider the following 454-residue polypeptide: Bifunctional protein GlmU (454 aa).

Residues 1–225 (MNIVILAAGM…IWETLGVNSK (225 aa)) form a pyrophosphorylase region. UDP-N-acetyl-alpha-D-glucosamine is bound by residues 6 to 9 (LAAG), K20, Q71, 76 to 77 (GT), 98 to 100 (YGD), G135, E150, N165, and N223. D100 is a Mg(2+) binding site. N223 contacts Mg(2+). The interval 226 to 246 (LQLAEVERIHQGNQARRLLEA) is linker. The N-acetyltransferase stretch occupies residues 247 to 454 (GVTLLDPARI…WQRPVKQPKK (208 aa)). UDP-N-acetyl-alpha-D-glucosamine contacts are provided by R329 and K347. The Proton acceptor role is filled by H359. UDP-N-acetyl-alpha-D-glucosamine contacts are provided by Y362 and N373. Acetyl-CoA contacts are provided by residues A376, 382–383 (NY), S401, A419, and R436.

It in the N-terminal section; belongs to the N-acetylglucosamine-1-phosphate uridyltransferase family. This sequence in the C-terminal section; belongs to the transferase hexapeptide repeat family. As to quaternary structure, homotrimer. The cofactor is Mg(2+).

It is found in the cytoplasm. The enzyme catalyses alpha-D-glucosamine 1-phosphate + acetyl-CoA = N-acetyl-alpha-D-glucosamine 1-phosphate + CoA + H(+). It catalyses the reaction N-acetyl-alpha-D-glucosamine 1-phosphate + UTP + H(+) = UDP-N-acetyl-alpha-D-glucosamine + diphosphate. The protein operates within nucleotide-sugar biosynthesis; UDP-N-acetyl-alpha-D-glucosamine biosynthesis; N-acetyl-alpha-D-glucosamine 1-phosphate from alpha-D-glucosamine 6-phosphate (route II): step 2/2. It functions in the pathway nucleotide-sugar biosynthesis; UDP-N-acetyl-alpha-D-glucosamine biosynthesis; UDP-N-acetyl-alpha-D-glucosamine from N-acetyl-alpha-D-glucosamine 1-phosphate: step 1/1. It participates in bacterial outer membrane biogenesis; LPS lipid A biosynthesis. Functionally, catalyzes the last two sequential reactions in the de novo biosynthetic pathway for UDP-N-acetylglucosamine (UDP-GlcNAc). The C-terminal domain catalyzes the transfer of acetyl group from acetyl coenzyme A to glucosamine-1-phosphate (GlcN-1-P) to produce N-acetylglucosamine-1-phosphate (GlcNAc-1-P), which is converted into UDP-GlcNAc by the transfer of uridine 5-monophosphate (from uridine 5-triphosphate), a reaction catalyzed by the N-terminal domain. This is Bifunctional protein GlmU from Cupriavidus necator (strain ATCC 17699 / DSM 428 / KCTC 22496 / NCIMB 10442 / H16 / Stanier 337) (Ralstonia eutropha).